The following is a 1199-amino-acid chain: DNA-directed RNA polymerase subunit beta' (1199 aa).

Zn(2+) is bound by residues Cys60, Cys62, Cys75, and Cys78. Mg(2+) contacts are provided by Asp449, Asp451, and Asp453. Zn(2+) is bound by residues Cys818, Cys892, Cys899, and Cys902.

This sequence belongs to the RNA polymerase beta' chain family. As to quaternary structure, the RNAP catalytic core consists of 2 alpha, 1 beta, 1 beta' and 1 omega subunit. When a sigma factor is associated with the core the holoenzyme is formed, which can initiate transcription. The cofactor is Mg(2+). Zn(2+) is required as a cofactor.

It carries out the reaction RNA(n) + a ribonucleoside 5'-triphosphate = RNA(n+1) + diphosphate. Its function is as follows. DNA-dependent RNA polymerase catalyzes the transcription of DNA into RNA using the four ribonucleoside triphosphates as substrates. The chain is DNA-directed RNA polymerase subunit beta' from Bacillus pumilus (strain SAFR-032).